Consider the following 1214-residue polypeptide: Zinc finger E-box-binding homeobox 2 (1214 aa).

The segment at 1 to 101 is disordered; sequence MKQPIMADGP…GVEHPWHNNE (101 aa). Over residues 12–24 the composition is skewed to basic residues; it reads CKRRKQANPRRKN. The segment covering 57–74 has biased composition (polar residues); it reads DQETSPASVPNHESSPHV. The segment covering 89 to 98 has biased composition (basic and acidic residues); sequence REGGVEHPWH. Phosphoserine is present on serine 142. C2H2-type zinc fingers lie at residues 211 to 234, 241 to 263, and 282 to 304; these read LTCPYCDRGYKRLTSLKEHIKYRH, FSCPLCSYTFAYRTQLERHMVTH, and FKCTECGKAFKYKHHLKEHLRIH. The C2H2-type 4; atypical zinc finger occupies 310 to 334; that stretch reads YECPNCKKRFSHSGSYSSHISSKKC. Residues serine 356, serine 360, and serine 364 each carry the phosphoserine modification. Lysine 377 is subject to N6-acetyllysine. Lysine 391 is covalently cross-linked (Glycyl lysine isopeptide (Lys-Gly) (interchain with G-Cter in SUMO); alternate). Residue lysine 391 forms a Glycyl lysine isopeptide (Lys-Gly) (interchain with G-Cter in SUMO2); alternate linkage. Residues 437 to 487 are SMAD-MH2 binding domain; sequence QHLGVGMEAPLLGFPTMNSNLSEVQKVLQIVDNTVSRQKMDCKAEEISKLK. Residues lysine 479 and lysine 555 each participate in a glycyl lysine isopeptide (Lys-Gly) (interchain with G-Cter in SUMO2) cross-link. Residues 581–605 form a C2H2-type 5; atypical zinc finger; that stretch reads FSCQFCKESFPGPIPLHQHERYLCK. Glycyl lysine isopeptide (Lys-Gly) (interchain with G-Cter in SUMO2) cross-links involve residues lysine 611 and lysine 632. Residues 644-703 constitute a DNA-binding region (homeobox; atypical); it reads GMTSPINPYKDHMSVLKAYYAMNMEPNSDELLKISIAVGLPQEFVKEWFEQRKVYQYSNS. Serine 647 is modified (phosphoserine). Over residues 702–715 the composition is skewed to low complexity; sequence NSRSPSLERSSKPL. 3 disordered regions span residues 702–740, 771–810, and 832–857; these read NSRSPSLERSSKPLAPNSNPPTKDSLLPRSPVKPMDSIT, PVEKLDHSRSNTPSPLNLSSTSSKNSHSSSYTPNSFSSEE, and ATKNKTKASSISLDHNSVSSSSENSD. Lysine 713 is covalently cross-linked (Glycyl lysine isopeptide (Lys-Gly) (interchain with G-Cter in SUMO2)). 2 positions are modified to phosphoserine: serine 731 and serine 780. 2 stretches are compositionally biased toward low complexity: residues 780-808 and 840-854; these read SNTPSPLNLSSTSSKNSHSSSYTPNSFSS and SSISLDHNSVSSSSE. Threonine 782 carries the post-translational modification Phosphothreonine. The residue at position 784 (serine 784) is a Phosphoserine. Lysine 866 is covalently cross-linked (Glycyl lysine isopeptide (Lys-Gly) (interchain with G-Cter in SUMO); alternate). A Glycyl lysine isopeptide (Lys-Gly) (interchain with G-Cter in SUMO2); alternate cross-link involves residue lysine 866. 2 consecutive C2H2-type zinc fingers follow at residues 999 to 1021 and 1027 to 1049; these read YACDLCDKTFQKSSSLLRHKYEH and HQCQICKKAFKHKHHLIEHSRLH. The C2H2-type 8; atypical zinc-finger motif lies at 1055 to 1076; sequence YQCDKCGKRFSHSGSYSQHMNH. The segment at 1117–1214 is disordered; it reads TPQGYSDSEE…HEEDNMEDGM (98 aa). 2 positions are modified to phosphoserine: serine 1122 and serine 1124. Residues 1127–1155 are compositionally biased toward basic and acidic residues; it reads RESMPRDGESEKEHEKEGEDGYGKLGRQD. Residues 1156–1167 are compositionally biased toward acidic residues; the sequence is GDEEFEEEEEES. Basic and acidic residues-rich tracts occupy residues 1168–1179 and 1186–1205; these read ENKSMDTDPETI and GDHSMDDSSEDGKMETKSDH. Serine 1203 is subject to Phosphoserine.

This sequence belongs to the delta-EF1/ZFH-1 C2H2-type zinc-finger family. Binds activated SMAD1, activated SMAD2 and activated SMAD3; binding with SMAD4 is not detected. Interacts with CBX4 and CTBP1. Post-translationally, sumoylation on Lys-391 and Lys-866 is promoted by the E3 SUMO-protein ligase CBX4, and impairs interaction with CTBP1 and transcription repression activity.

Its subcellular location is the nucleus. The protein resides in the chromosome. Its function is as follows. Transcriptional inhibitor that binds to DNA sequence 5'-CACCT-3' in different promoters. Represses transcription of E-cadherin. Represses expression of MEOX2. This Homo sapiens (Human) protein is Zinc finger E-box-binding homeobox 2.